The primary structure comprises 355 residues: Phosphoribosylformylglycinamidine cyclo-ligase (355 aa).

The protein belongs to the AIR synthase family.

It localises to the cytoplasm. The enzyme catalyses 2-formamido-N(1)-(5-O-phospho-beta-D-ribosyl)acetamidine + ATP = 5-amino-1-(5-phospho-beta-D-ribosyl)imidazole + ADP + phosphate + H(+). The protein operates within purine metabolism; IMP biosynthesis via de novo pathway; 5-amino-1-(5-phospho-D-ribosyl)imidazole from N(2)-formyl-N(1)-(5-phospho-D-ribosyl)glycinamide: step 2/2. This is Phosphoribosylformylglycinamidine cyclo-ligase from Hamiltonella defensa subsp. Acyrthosiphon pisum (strain 5AT).